The following is a 514-amino-acid chain: Tumor necrosis factor receptor superfamily member EDAR (514 aa).

The signal sequence occupies residues 1 to 27 (MKMWKRRGQKKSMFLSSLLVCCMFASA). Residues 28–183 (EYSSCGEYEF…SPGQGHLATA (156 aa)) are Extracellular-facing. 3 TNFR-Cys repeats span residues 31 to 72 (SCGE…GFAC), 74 to 114 (PCPQ…DAEC), and 116 to 149 (PCLPGYYMLENRARNLYAMVCHSCQNAPLNTKEC). Disulfide bonds link Cys32–Cys45, Cys48–Cys61, Cys51–Cys72, Cys75–Cys88, Cys94–Cys114, Cys117–Cys136, and Cys139–Cys149. Asn39 and Asn58 each carry an N-linked (GlcNAc...) asparagine glycan. Residues 184 to 204 (LIIAMSTIFIMAIAIVLIIMF) form a helical membrane-spanning segment. At 205-514 (YILKAKPNGQ…TSPSPRCASV (310 aa)) the chain is on the cytoplasmic side. Positions 254–294 (LKASPQKTVKSENDASSENEQLLSRSIDSDEEPTSDKLRSS) are disordered. Residues 267-279 (DASSENEQLLSRS) show a composition bias toward polar residues. A Death domain is found at 403–476 (RMLSSSYSSD…DAVESLCADV (74 aa)).

Its subcellular location is the membrane. Its function is as follows. Receptor for EDA. May mediate the activation of NF-kappa-B and JNK. This is Tumor necrosis factor receptor superfamily member EDAR (edar) from Oryzias latipes (Japanese rice fish).